A 131-amino-acid chain; its full sequence is Small ribosomal subunit protein uS8 (131 aa).

The protein belongs to the universal ribosomal protein uS8 family. As to quaternary structure, part of the 30S ribosomal subunit. Contacts proteins S5 and S12.

Its function is as follows. One of the primary rRNA binding proteins, it binds directly to 16S rRNA central domain where it helps coordinate assembly of the platform of the 30S subunit. The chain is Small ribosomal subunit protein uS8 from Helicobacter pylori (strain P12).